A 245-amino-acid chain; its full sequence is Probable 2-phosphosulfolactate phosphatase (245 aa).

The protein belongs to the ComB family. Mg(2+) serves as cofactor.

The catalysed reaction is (2R)-O-phospho-3-sulfolactate + H2O = (2R)-3-sulfolactate + phosphate. This is Probable 2-phosphosulfolactate phosphatase from Nostoc sp. (strain PCC 7120 / SAG 25.82 / UTEX 2576).